Consider the following 130-residue polypeptide: Cystatin (130 aa).

Positions 1–19 (MEWKIVVPLFAVAFTVANA) are cleaved as a signal peptide. A Secondary area of contact motif is present at residues 67–71 (QVVSG). Disulfide bonds link Cys85-Cys94 and Cys108-Cys128.

Belongs to the cystatin family.

The protein localises to the secreted. In terms of biological role, cysteine proteinase inhibitor. This Oncorhynchus mykiss (Rainbow trout) protein is Cystatin.